Here is a 124-residue protein sequence, read N- to C-terminus: Conotoxin Im14.2 (124 aa).

An N-terminal signal peptide occupies residues 1–20; that stretch reads MARFLSILLCFAMATGLAAG. The propeptide occupies 21–99; sequence IRYPDRVLGR…AENPVRDPKK (79 aa).

In terms of processing, contain 2 disulfide bonds. As to expression, expressed by the venom duct.

It is found in the secreted. Its function is as follows. Probable neurotoxin. This Conus imperialis (Imperial cone) protein is Conotoxin Im14.2.